We begin with the raw amino-acid sequence, 269 residues long: Indole-3-glycerol phosphate synthase (269 aa).

This sequence belongs to the TrpC family.

It catalyses the reaction 1-(2-carboxyphenylamino)-1-deoxy-D-ribulose 5-phosphate + H(+) = (1S,2R)-1-C-(indol-3-yl)glycerol 3-phosphate + CO2 + H2O. It functions in the pathway amino-acid biosynthesis; L-tryptophan biosynthesis; L-tryptophan from chorismate: step 4/5. The sequence is that of Indole-3-glycerol phosphate synthase from Streptomyces griseus subsp. griseus (strain JCM 4626 / CBS 651.72 / NBRC 13350 / KCC S-0626 / ISP 5235).